Reading from the N-terminus, the 749-residue chain is Ribosomal RNA large subunit methyltransferase K/L (749 aa).

Residues 43–154 (QGYKVCLWSR…KDKATIYLDL (112 aa)) form the THUMP domain. The interval 386 to 406 (VEPVAPKKTNKETPEPINPWT) is disordered.

This sequence belongs to the methyltransferase superfamily. RlmKL family.

It localises to the cytoplasm. The catalysed reaction is guanosine(2445) in 23S rRNA + S-adenosyl-L-methionine = N(2)-methylguanosine(2445) in 23S rRNA + S-adenosyl-L-homocysteine + H(+). The enzyme catalyses guanosine(2069) in 23S rRNA + S-adenosyl-L-methionine = N(2)-methylguanosine(2069) in 23S rRNA + S-adenosyl-L-homocysteine + H(+). In terms of biological role, specifically methylates the guanine in position 2445 (m2G2445) and the guanine in position 2069 (m7G2069) of 23S rRNA. This Psychromonas ingrahamii (strain DSM 17664 / CCUG 51855 / 37) protein is Ribosomal RNA large subunit methyltransferase K/L.